The primary structure comprises 721 residues: Oviduct-specific glycoprotein (721 aa).

An N-terminal signal peptide occupies residues 1 to 21 (MGRLLLLAGLVLLMKHSDGTA). Residues 22-385 (YKLVCYFTNW…HILNELLVQT (364 aa)) form the GH18 domain. C26 and C51 are joined by a disulfide. Chitin-binding positions include 71 to 72 (LQ), 98 to 101 (GGWN), Y142, 211 to 214 (LSYD), and W355. Residues N402 and N442 are each glycosylated (N-linked (GlcNAc...) asparagine). Over residues 444-456 (TTVPSDGSVTPGG) the composition is skewed to polar residues. The segment at 444-465 (TTVPSDGSVTPGGTASPRKHAV) is disordered. The N-linked (GlcNAc...) asparagine glycan is linked to N469. A run of 21 repeats spans residues 486–492 (SKTTTGV), 493–499 (SKTTTGI), 500–506 (SKTTTGV), 507–513 (SKTTTGV), 514–520 (SKATAGI), 521–527 (SKTIPEI), 528–534 (SKATAGV), 535–541 (SKTTTGV), 542–548 (SKTTTGI), 549–555 (SKTITGV), 556–562 (SKTTTGI), 563–569 (SKTTTGI), 570–576 (SKTTTGV), 577–583 (SKITTGV), 584–590 (SKTTTGI), 591–597 (SKTTTGI), 598–604 (SQTTTGI), 605–611 (SKTTTDI), 612–618 (SKTTTGI), 619–625 (SKTTPGI), and 626–632 (SKTTPGM). A 21 X 7 AA tandem repeats of S-K-[TAI]-[TI]-[TAP]-[GED]-[IVM] region spans residues 486 to 632 (SKTTTGVSKT…PGISKTTPGM (147 aa)).

The protein belongs to the glycosyl hydrolase 18 family. As to expression, epithelial cells of the oviduct.

The protein localises to the cytoplasmic vesicle. Its subcellular location is the secretory vesicle. Its function is as follows. Binds to oocyte zona pellucida in vivo. May play a role in the fertilization process and/or early embryonic development. The polypeptide is Oviduct-specific glycoprotein (Ovgp1) (Mus musculus (Mouse)).